Reading from the N-terminus, the 643-residue chain is DNA polymerase III subunit tau (643 aa).

45–52 (GTRGVGKT) serves as a coordination point for ATP. Zn(2+)-binding residues include cysteine 64, cysteine 73, cysteine 76, and cysteine 79. The segment at 385–404 (TPTQVPPQPQSAPQQAPTVP) is disordered.

Belongs to the DnaX/STICHEL family. In terms of assembly, the DNA polymerase III holoenzyme complex contains at least 10 different subunits organized into 3 functionally essential subassemblies: the Pol III core, the beta sliding clamp processivity factor and the clamp-loading complex. The Pol III core (subunits alpha, epsilon and theta) contains the polymerase and the 3'-5' exonuclease proofreading activities. The polymerase is tethered to the template via the dimeric beta sliding clamp processivity factor. The clamp-loading complex (also called gamma complex) assembles the beta sliding clamp onto the primed template and plays a central role in the organization and communication at the replication fork. The clamp-loading complex contains delta, delta', psi and chi, and 3 copies of either or both of two different DnaX proteins, gamma and tau. The DNA replisome complex has a single clamp loader (3 tau and 1 each of delta, delta', psi and chi subunits) which binds 3 Pol III cores (1 core on the leading strand and 2 on the lagging strand) each with a beta sliding clamp dimer. Additional proteins in the replisome are other copies of gamma, psi and chi, Ssb, DNA helicase and RNA primase. The clamp loader hydrolyzes ATP to assemble the beta processivity factor onto the primed template and plays a central role in the organization and communication at the replication fork; the minimal complex to load the beta sliding clamp on DNA is delta, delta', gamma.

It catalyses the reaction DNA(n) + a 2'-deoxyribonucleoside 5'-triphosphate = DNA(n+1) + diphosphate. In terms of biological role, part of the beta sliding clamp loading complex, which hydrolyzes ATP to load the beta clamp onto primed DNA to form the DNA replication pre-initiation complex. DNA polymerase III is a complex, multichain enzyme responsible for most of the replicative synthesis in bacteria. This DNA polymerase also exhibits 3'-5' exonuclease activity. The gamma complex (gamma(3),delta,delta') is thought to load beta dimers onto DNA by binding ATP which alters the complex's conformation so it can bind beta sliding clamp dimers and open them at one interface. Primed DNA is recognized, ATP is hydrolyzed releasing the gamma complex and closing the beta sliding clamp ring around the primed DNA. Its function is as follows. Serves as a scaffold to trimerize the core complex. Functionally, interacts with the delta and delta' subunits to transfer the beta subunit on the DNA. Interacts with ATP, drives ATP-induced conformational changes in the gamma complex that opens the beta sliding clamp ring. After loading of primed DNA ATP is hydrolyzed and the beta sliding clamp ring closes. The polypeptide is DNA polymerase III subunit tau (dnaX) (Escherichia coli (strain K12)).